Reading from the N-terminus, the 221-residue chain is Probable septum site-determining protein MinC (221 aa).

This sequence belongs to the MinC family. In terms of assembly, interacts with MinD and FtsZ.

In terms of biological role, cell division inhibitor that blocks the formation of polar Z ring septums. Rapidly oscillates between the poles of the cell to destabilize FtsZ filaments that have formed before they mature into polar Z rings. Prevents FtsZ polymerization. This chain is Probable septum site-determining protein MinC, found in Shewanella oneidensis (strain ATCC 700550 / JCM 31522 / CIP 106686 / LMG 19005 / NCIMB 14063 / MR-1).